We begin with the raw amino-acid sequence, 282 residues long: Nicotianamine synthase-like 5 protein (282 aa).

This sequence belongs to the nicotianamine synthase (NAS)-like family.

The polypeptide is Nicotianamine synthase-like 5 protein (NAS5) (Hordeum vulgare (Barley)).